Here is a 1006-residue protein sequence, read N- to C-terminus: MSEDSEEEDYSDRSISDDDDLDEDSFMKFVSDDIHPCTLLAADSIGDPFFPRTTQILLEYQLGRWVPRLRGPRDLYGVSSSGPLSPTRWPYHCEVIDEKVQHIEWTPFVPEPVYVPTGLEIEPVYPNSKEDTVVYLAEDDHLCKAYKEPCFVYSRVGGNRTSLKQPVDNCDNTLVFEARFESGNLQKVVKVADHEYELTVRPDLFTNKHTQWYYFQVTNTQAEIVYRFTIVNFTKPASLYNRGMKPLFYSEKEAKTHNIGWQRIGDQIKYYKNNLGQDGRHFFSLTWTFQFPHSQDTCYFAHCYPYTYSNLQEYLSGINSDPVRSKFCKIRVLCHTLARNMVYVLTITTPLKTSDSKRKAVILTARVHPGETNSSWIMKGFLDYILGDSSDARLLRDTFIFKVVPMLNPDGVIVGNYRCSLAGRDLNRNYTSLLKESFPSVWYTRNMINRLMEKREVILYCDLHGHSRKQNIFMYGCDGSSRSKTKGLYLQQRIFPLMLSKNCPNIFSFSACKFNVQKSKEGTGRVVMWKMGIRNSFTLEATFCGSTLGNKRGTHFGTKDLESMGYHFCDSLLDYCDPDRSKYYQCLKELEEMEKHLSSERVSDNTDTSLVEISLDVESSSRGSDSSESNDTQTYLLKVTSQARNKKKYLKTKRERNAILANCQNNMQEVYGKEHLLQRHDESNSDGNDPRIDAPDVYVAHCFRRPLPNQGVVKIPGQRFYPGKTWSSSQRMIKSLNKDHRTCILETCKNPIQEVQSRGINIHESCFKMAKCPMNKRPSHWIEKTRIPTESHHQLKSKAKRCSSFQSKRTGTNWTDDEKRIYRDKRIAQTQEILKYLLPIVESSQNRKSTQMNNLINPIANLQQHQLIPTACINRRRYSIPWTPTRNLPFKAQRNLMTDTSEWLQSVPLGSFESLLPLCNLQKKTKHFELWGKKAKDVQLATSQWEAVPLSSNMDASIIRGNSVLQPKEFTMRSSKQRIPYLTKTSKKPSESDGLLTFQLKIHRNS.

The Peptidase M14 domain maps to 304–576 (YPYTYSNLQE…HFCDSLLDYC (273 aa)). Zn(2+) is bound by residues His-368, Glu-371, and His-464. Catalysis depends on Glu-540, which acts as the Proton donor/acceptor. The interval 790–810 (ESHHQLKSKAKRCSSFQSKRT) is disordered.

This sequence belongs to the peptidase M14 family. The cofactor is Zn(2+). As to expression, widely expressed. Expressed abundantly in tissues with m otile cilia such as testis, lung and trachea. Abundantly expressed in pituitary and kidney, moderately expressed in brain, eye, fat, pancreas, stomach, and adrenal.

The protein localises to the cytoplasm. Its subcellular location is the cytosol. It catalyses the reaction (L-glutamyl)(n+1)-gamma-L-glutamyl-L-glutamyl-[protein] + H2O = (L-glutamyl)(n)-gamma-L-glutamyl-L-glutamyl-[protein] + L-glutamate. Functionally, metallocarboxypeptidase that mediates deglutamylation of tubulin and non-tubulin target proteins. Catalyzes the removal of polyglutamate side chains present on the gamma-carboxyl group of glutamate residues within the C-terminal tail of tubulin protein. Specifically cleaves tubulin long-side-chains, while it is not able to remove the branching point glutamate. Also catalyzes the removal of polyglutamate residues from the carboxy-terminus of non-tubulin proteins such as MYLK. May catalyze the hydrolysis of aspartate from the carboxy-terminus of target proteins. Does not show detyrosinase or deglycylase activities from the carboxy-terminus of target proteins. This chain is Cytosolic carboxypeptidase 3, found in Mus musculus (Mouse).